The primary structure comprises 145 residues: MRQTFMANESNIERKWYVIDAEGQTLGRLSSEVAAILRGKNKVTYTPHVDTGDYVIIINASKIEFTGNKEQDKMYYRHSNHPGGLKSISAGELKRTNPERLLETSIKGMLPSTRLGEKQGKKLFVYGGAEHPHAAQQPENYELRG.

The protein belongs to the universal ribosomal protein uL13 family. Part of the 50S ribosomal subunit.

Functionally, this protein is one of the early assembly proteins of the 50S ribosomal subunit, although it is not seen to bind rRNA by itself. It is important during the early stages of 50S assembly. This Staphylococcus epidermidis (strain ATCC 35984 / DSM 28319 / BCRC 17069 / CCUG 31568 / BM 3577 / RP62A) protein is Large ribosomal subunit protein uL13.